The chain runs to 449 residues: Phosphoglucosamine mutase (449 aa).

Residue S100 is the Phosphoserine intermediate of the active site. Residues S100, D241, D243, and D245 each coordinate Mg(2+). Phosphoserine is present on S100.

The protein belongs to the phosphohexose mutase family. Mg(2+) is required as a cofactor. Post-translationally, activated by phosphorylation.

The enzyme catalyses alpha-D-glucosamine 1-phosphate = D-glucosamine 6-phosphate. Its function is as follows. Catalyzes the conversion of glucosamine-6-phosphate to glucosamine-1-phosphate. The chain is Phosphoglucosamine mutase from Caldicellulosiruptor saccharolyticus (strain ATCC 43494 / DSM 8903 / Tp8T 6331).